The sequence spans 640 residues: ETV5-related protein Ets96B (640 aa).

Positions 315 to 375 (HADSTTTAAQ…HHGHQQAEQQ (61 aa)) are disordered. Residues 321-356 (TAAQQQQQQQEQQQQQQQQQQQQQHQQQLQQAAALH) are a coiled coil. The span at 322-355 (AAQQQQQQQEQQQQQQQQQQQQQHQQQLQQAAAL) shows a compositional bias: low complexity. The segment covering 356-369 (HPHHHHSHHGHHGH) has biased composition (basic residues). The ETS DNA-binding region spans 498 to 579 (LQLWQFLVAL…NGERYVYRFV (82 aa)). A compositionally biased stretch (polar residues) spans 609-624 (LAKTPPTSGDSQTQSP). The tract at residues 609-628 (LAKTPPTSGDSQTQSPRVAK) is disordered.

The protein belongs to the ETS family. In terms of tissue distribution, in the adult brain, expressed almost exclusively in dopaminergic neurons.

It localises to the nucleus. Its function is as follows. Required in dopaminergic neurons to regulate expression of genes involved in dopamine signaling. Decreases expression of the dopamine transporter DAT and increases expression of the dopamine transporter Vmat and the tyrosine 3-monooxygenase ple which is involved in dopamine biosynthesis. Also involved in negatively regulating the expression of a group of endoplasmic reticulum proteins, the molecular chaperone Calr and the protein disulfide isomerases CaBP1 and ERp60. The chain is ETV5-related protein Ets96B from Drosophila melanogaster (Fruit fly).